A 355-amino-acid chain; its full sequence is Syntaxin-5 (355 aa).

Residues 1-333 (MIPRKRYGSK…KYFQSVTSNR (333 aa)) lie on the Cytoplasmic side of the membrane. Residues 245–247 (IDM) carry the IxM motif; signal for cargo packaging into COPII-coated vesicles motif. Residues 263-325 (DSYIQSRADT…EAAHSEILKY (63 aa)) form the t-SNARE coiled-coil homology domain. The stretch at 287 to 318 (FQQLAHMVKEQEETIQRIDENVLGAQLDVEAA) forms a coiled coil. Residues 334–354 (WLMVKIFLILIVFFIIFVVFL) traverse the membrane as a helical; Anchor for type IV membrane protein segment. A topological domain (vesicular) is located at residue A355.

The protein belongs to the syntaxin family. In terms of assembly, part of a ternary complex containing STX5A, NSFL1C and VCP. Part of a unique SNARE complex composed of the Golgi SNAREs GOSR1, GOSR2 and YKT6. This complex also includes VTI1A. Component of a SNARE complex consisting of STX5, YKT6, GOSR1 and BET1L. Interacts with BET1L. Interacts with BET1. Interacts with COG4. Interacts with GM130/GOLGA2. Interacts (via IxM motif) with SEC24C and SEC24D; mediates STX5 packaging into COPII-coated vesicles. Interacts with VLDLR; this interaction mediates VLDLR translocation from the endoplasmic reticulum to the plasma membrane. In terms of tissue distribution, expressed in the brain, heart, spleen, lung, liver, kidney and testis.

The protein resides in the endoplasmic reticulum-Golgi intermediate compartment membrane. The protein localises to the golgi apparatus membrane. In terms of biological role, mediates endoplasmic reticulum to Golgi transport. Together with p115/USO1 and GM130/GOLGA2, involved in vesicle tethering and fusion at the cis-Golgi membrane to maintain the stacked and inter-connected structure of the Golgi apparatus. Functionally, required for Golgi to endoplasmic reticulum retrogade transport, and for intra-Golgi transport. The chain is Syntaxin-5 (Stx5) from Rattus norvegicus (Rat).